An 845-amino-acid chain; its full sequence is MSNSRPRSRRDAGGGAGAAGRDELVSRSLQSAEHCLGVQDFGTAYAHYLLVLSLAPELKHDVKETFQYTLFRWAEELDALSRIQDLLGCYEQALELFPDDEVICNSMGEHLFRMGFRDEAAGYFHKAVKLNPDFSDAKENFYRVANWLVERWHFIMLNDTKRNTIYNAAIQKAVCLGSKSVLDIGAGTGILSMFAKKAGAHSVYACELSKTMYELACDVVAANKMEAGIKLLHTKSLDIEIPKHIPERVSLVVTETVDAGLFGEGIVESLIHAWEHLLLQPKTKGESANCEKYGKVIPASAVIFGMAVECAEIRRHHRVGIKDIAGIHLPTNVKFQSPAYSSVDTEETIEPYTTEKMSRVPGGYLALTECFEIMTVDFNNLQELKSLATKKPDKIGIPVIKEGILDAIMVWFVLQLDDEHSLSTSPSEETCWEQAVYPVQDLADYWIKPGDHVMMEVSCQDCYLRIQSISVLGLECEMDVAKSFTQNKDLLSLGNEAELCSALANLQTSKPDAVEQTCILESTEIALLNNIPYHEGFKMAMSKVLSSLTPEKLYQTMDTHCQNEMSSGTGQSNTVQNILEPFYVLDVSEGFSVLPVIAGTLGQVKPYSSVEKDQHRIALDLISEANHFPKETLEFWLRHVEDESAMLQRPKSDKLWSIIILDVIEPSGLIQQEIMEKAAISRCLLQSGGKIFPQYVLMFGLLVESQTLLEENAVQGTERTLGLNIAPFINQFQVPIRVFLDLSSLPCIPLSKPVELLRLDLMTPYLNTSNREVKVYVCKSGRLTAIPFWYHMYLDEEIRLDTSSEASHWKQAAVVLDNPIQVEMGEELVLSIQHHKSNVSITVKQ.

3 TPR repeats span residues 25–58, 67–100, and 101–134; these read VSRSLQSAEHCLGVQDFGTAYAHYLLVLSLAPEL, QYTLFRWAEELDALSRIQDLLGCYEQALELFPDD, and EVICNSMGEHLFRMGFRDEAAGYFHKAVKLNPDF. 2 consecutive SAM-dependent MTase PRMT-type domains span residues 137 to 466 and 530 to 845; these read AKEN…YLRI and NIPY…TVKQ.

The protein belongs to the class I-like SAM-binding methyltransferase superfamily. Protein arginine N-methyltransferase family. Found in a complex with PRMT9, SF3B2 and SF3B4. Interacts with SF3B2.

Its subcellular location is the cytoplasm. The catalysed reaction is L-arginyl-[protein] + 2 S-adenosyl-L-methionine = N(omega),N(omega)'-dimethyl-L-arginyl-[protein] + 2 S-adenosyl-L-homocysteine + 2 H(+). Functionally, arginine methyltransferase that can both catalyze the formation of omega-N monomethylarginine (MMA) and symmetrical dimethylarginine (sDMA). Specifically mediates the symmetrical dimethylation of SF3B2. Involved in the regulation of alternative splicing of pre-mRNA. This chain is Protein arginine N-methyltransferase 9, found in Homo sapiens (Human).